Here is a 590-residue protein sequence, read N- to C-terminus: Probable indole-3-acetic acid-amido synthetase GH3.1 (590 aa).

This sequence belongs to the IAA-amido conjugating enzyme family.

Catalyzes the synthesis of indole-3-acetic acid (IAA)-amino acid conjugates, providing a mechanism for the plant to cope with the presence of excess auxin. This Arabidopsis thaliana (Mouse-ear cress) protein is Probable indole-3-acetic acid-amido synthetase GH3.1 (GH3.1).